Consider the following 293-residue polypeptide: Ribosomal protein L11 methyltransferase (293 aa).

The S-adenosyl-L-methionine site is built by Thr145, Gly166, Asp188, and Asn230.

The protein belongs to the methyltransferase superfamily. PrmA family.

The protein localises to the cytoplasm. It catalyses the reaction L-lysyl-[protein] + 3 S-adenosyl-L-methionine = N(6),N(6),N(6)-trimethyl-L-lysyl-[protein] + 3 S-adenosyl-L-homocysteine + 3 H(+). Methylates ribosomal protein L11. This chain is Ribosomal protein L11 methyltransferase, found in Yersinia pseudotuberculosis serotype I (strain IP32953).